Reading from the N-terminus, the 340-residue chain is Putative cystathionine beta-lyase (340 aa).

Position 208 is an N6-(pyridoxal phosphate)lysine (lysine 208).

It belongs to the trans-sulfuration enzymes family. It depends on pyridoxal 5'-phosphate as a cofactor.

The catalysed reaction is L,L-cystathionine + H2O = L-homocysteine + pyruvate + NH4(+). It carries out the reaction an S-substituted L-cysteine + H2O = a thiol + pyruvate + NH4(+). The protein operates within amino-acid biosynthesis; L-methionine biosynthesis via de novo pathway; L-homocysteine from L-cystathionine: step 1/1. The sequence is that of Putative cystathionine beta-lyase (IRC7) from Saccharomyces cerevisiae (strain ATCC 204508 / S288c) (Baker's yeast).